A 765-amino-acid polypeptide reads, in one-letter code: Probable glycosyltransferase STELLO2 (765 aa).

Over Met-1 to Arg-43 the chain is Cytoplasmic. Residues Ile-44–Thr-64 form a helical membrane-spanning segment. At Asp-65–Val-765 the chain is on the lumenal side. 2 N-linked (GlcNAc...) asparagine glycosylation sites follow: Asn-235 and Asn-723.

The protein belongs to the STELLO family. Homo- and heterodimer with STL1. Interacts with CESA1, CESA3, CESA4, CESA6, CESA7 and CESA8, but not with GOT1. Expressed in cells that are expanding or producing secondary cell walls.

The protein resides in the golgi apparatus membrane. Probable glycosyltransferase regulating the assembly and trafficking of cellulose synthase complexes. This Arabidopsis thaliana (Mouse-ear cress) protein is Probable glycosyltransferase STELLO2.